A 221-amino-acid chain; its full sequence is Putative hemin import ATP-binding protein HrtA (221 aa).

In terms of domain architecture, ABC transporter spans 3–221 (LVVEDIVKNF…IELEDGKITD (219 aa)). Residue 39–46 (GASGSGKT) coordinates ATP.

Belongs to the ABC transporter superfamily. HrtA family. As to quaternary structure, the complex is composed of two ATP-binding proteins (HrtA), two transmembrane proteins (HrtB) and a solute-binding protein.

It is found in the cell membrane. In terms of biological role, part of the ABC transporter complex hrt involved in hemin import. Responsible for energy coupling to the transport system. The chain is Putative hemin import ATP-binding protein HrtA (hrtA) from Staphylococcus aureus (strain bovine RF122 / ET3-1).